A 359-amino-acid chain; its full sequence is Peptide chain release factor 1 (359 aa).

Q236 is subject to N5-methylglutamine.

It belongs to the prokaryotic/mitochondrial release factor family. Methylated by PrmC. Methylation increases the termination efficiency of RF1.

The protein localises to the cytoplasm. In terms of biological role, peptide chain release factor 1 directs the termination of translation in response to the peptide chain termination codons UAG and UAA. This Streptococcus thermophilus (strain ATCC BAA-250 / LMG 18311) protein is Peptide chain release factor 1.